The sequence spans 290 residues: Nitrogenase iron protein 2 (290 aa).

10–17 lines the ATP pocket; the sequence is GKGGIGKS. Position 98 (Cys98) interacts with [4Fe-4S] cluster. Arg101 carries the ADP-ribosylarginine; by dinitrogenase reductase ADP-ribosyltransferase modification. Cys133 serves as a coordination point for [4Fe-4S] cluster.

This sequence belongs to the NifH/BchL/ChlL family. In terms of assembly, homodimer. It depends on [4Fe-4S] cluster as a cofactor. Post-translationally, the reversible ADP-ribosylation of Arg-101 inactivates the nitrogenase reductase and regulates nitrogenase activity.

It carries out the reaction N2 + 8 reduced [2Fe-2S]-[ferredoxin] + 16 ATP + 16 H2O = H2 + 8 oxidized [2Fe-2S]-[ferredoxin] + 2 NH4(+) + 16 ADP + 16 phosphate + 6 H(+). Its function is as follows. The key enzymatic reactions in nitrogen fixation are catalyzed by the nitrogenase complex, which has 2 components: the iron protein (component 2) and a component 1 which is either a molybdenum-iron protein, a vanadium-iron, or an iron-iron protein. The protein is Nitrogenase iron protein 2 (vnfH) of Azotobacter vinelandii.